The following is a 241-amino-acid chain: Methylthioribulose-1-phosphate dehydratase (241 aa).

Residues 1 to 12 (MSQEITQKDNND) show a composition bias toward basic and acidic residues. The interval 1–22 (MSQEITQKDNNDHLVQSSDPDH) is disordered. Residue Cys-101 participates in substrate binding. Residues His-118 and His-120 each coordinate Zn(2+). The active-site Proton donor/acceptor is Glu-147. His-203 lines the Zn(2+) pocket.

Belongs to the aldolase class II family. MtnB subfamily. Zn(2+) is required as a cofactor.

The protein resides in the cytoplasm. It catalyses the reaction 5-(methylsulfanyl)-D-ribulose 1-phosphate = 5-methylsulfanyl-2,3-dioxopentyl phosphate + H2O. It functions in the pathway amino-acid biosynthesis; L-methionine biosynthesis via salvage pathway; L-methionine from S-methyl-5-thio-alpha-D-ribose 1-phosphate: step 2/6. Functionally, catalyzes the dehydration of methylthioribulose-1-phosphate (MTRu-1-P) into 2,3-diketo-5-methylthiopentyl-1-phosphate (DK-MTP-1-P). The protein is Methylthioribulose-1-phosphate dehydratase of Aspergillus terreus (strain NIH 2624 / FGSC A1156).